The sequence spans 438 residues: Transmembrane protein 184C (438 aa).

A run of 7 helical transmembrane segments spans residues 17–37 (LAVV…VWEL), 48–68 (AWFI…WVIL), 86–106 (ILWM…YPSI), 176–196 (VLQY…CELL), 212–232 (YLVI…LLFY), 254–274 (VVFV…VGVI), and 287–307 (AVAT…AAIA). Positions 358–438 (PRKKFFPEDQ…EEPSEKPVAS (81 aa)) are disordered. Composition is skewed to low complexity over residues 374-390 (SLLS…ASSV) and 404-413 (TVTPQTTPTT). A compositionally biased stretch (basic and acidic residues) spans 426–438 (GVREEPSEKPVAS).

The protein belongs to the TMEM184 family.

It localises to the membrane. Functionally, possible tumor suppressor which may play a role in cell growth. This chain is Transmembrane protein 184C (TMEM184C), found in Bos taurus (Bovine).